A 645-amino-acid chain; its full sequence is Chaperone protein DnaK (645 aa).

Phosphothreonine; by autocatalysis is present on T200. Residues 603–645 (AYSAQKDSGTSTDSTASDTSGNPEERVVDSEYQEIKKDDEDKK) are disordered. A compositionally biased stretch (low complexity) spans 609 to 623 (DSGTSTDSTASDTSG). Basic and acidic residues predominate over residues 625–645 (PEERVVDSEYQEIKKDDEDKK).

It belongs to the heat shock protein 70 family.

Acts as a chaperone. This is Chaperone protein DnaK from Anaplasma marginale (strain St. Maries).